A 629-amino-acid chain; its full sequence is tRNA uridine 5-carboxymethylaminomethyl modification enzyme MnmG (629 aa).

Position 14–19 (14–19) interacts with FAD; the sequence is GAGHAG. 274–288 lines the NAD(+) pocket; it reads GPRYCPSIEDKVVRF.

It belongs to the MnmG family. As to quaternary structure, homodimer. Heterotetramer of two MnmE and two MnmG subunits. It depends on FAD as a cofactor.

The protein localises to the cytoplasm. In terms of biological role, NAD-binding protein involved in the addition of a carboxymethylaminomethyl (cmnm) group at the wobble position (U34) of certain tRNAs, forming tRNA-cmnm(5)s(2)U34. The sequence is that of tRNA uridine 5-carboxymethylaminomethyl modification enzyme MnmG from Xylella fastidiosa (strain Temecula1 / ATCC 700964).